The sequence spans 317 residues: MIDPKIVMAIVISFIVASILGPIIIPLLHKLKFGQNIRQEGPKSHLKKAGTPTIGGLIFIFATIITMFIMVGNPTDEAMIALYSFVGFGFVGFLDDLLKIIKKKNEGLTSGQKMILLLIVSGFLTWYAYKYIGTSINIPFLNGQINFGLFYIPFVMFYFAGVTNAVNLTDGLDGLATSVTVLVTTFLGIISYNLGHISLAIFCVALAGALLAFLRFNAFPARVFMGDTGSLALGGAVAMVALILKMPLILVLIGIIYVIETLSVILQVASFKLTGKRIFKMAPIHHHFEQLGWSETKIVSVFSIITVVFCFIAFASL.

9 consecutive transmembrane segments (helical) span residues 6–26 (IVMA…IIIP), 52–72 (PTIG…IMVG), 78–98 (AMIA…DDLL), 114–134 (MILL…YIGT), 145–165 (INFG…VTNA), 171–191 (GLDG…GIIS), 194–214 (LGHI…LAFL), 223–244 (VFMG…ALIL), and 297–317 (KIVS…FASL).

The protein belongs to the glycosyltransferase 4 family. MraY subfamily. Mg(2+) is required as a cofactor.

It is found in the cell membrane. It carries out the reaction UDP-N-acetyl-alpha-D-muramoyl-L-alanyl-gamma-D-glutamyl-meso-2,6-diaminopimeloyl-D-alanyl-D-alanine + di-trans,octa-cis-undecaprenyl phosphate = di-trans,octa-cis-undecaprenyl diphospho-N-acetyl-alpha-D-muramoyl-L-alanyl-D-glutamyl-meso-2,6-diaminopimeloyl-D-alanyl-D-alanine + UMP. The protein operates within cell wall biogenesis; peptidoglycan biosynthesis. Catalyzes the initial step of the lipid cycle reactions in the biosynthesis of the cell wall peptidoglycan: transfers peptidoglycan precursor phospho-MurNAc-pentapeptide from UDP-MurNAc-pentapeptide onto the lipid carrier undecaprenyl phosphate, yielding undecaprenyl-pyrophosphoryl-MurNAc-pentapeptide, known as lipid I. This is Phospho-N-acetylmuramoyl-pentapeptide-transferase from Clostridium perfringens (strain 13 / Type A).